The chain runs to 146 residues: Hemoglobin subunit beta (146 aa).

The residue at position 1 (Val-1) is an N-acetylvaline. The region spanning 2-146 (HLSGEEKAAV…VANALAHKYH (145 aa)) is the Globin domain. Position 12 is a phosphothreonine (Thr-12). At Ser-44 the chain carries Phosphoserine. Position 59 is an N6-acetyllysine (Lys-59). His-63 lines the heme b pocket. The residue at position 82 (Lys-82) is an N6-acetyllysine. His-92 lines the heme b pocket. Cys-93 is subject to S-nitrosocysteine. Lys-144 is modified (N6-acetyllysine).

This sequence belongs to the globin family. In terms of assembly, heterotetramer of two alpha chains and two beta chains. As to expression, red blood cells.

Its function is as follows. Involved in oxygen transport from the lung to the various peripheral tissues. The protein is Hemoglobin subunit beta (HBB) of Tupaia glis (Common tree shrew).